Here is a 475-residue protein sequence, read N- to C-terminus: 1,3-beta-glucanosyltransferase gel2 (475 aa).

The signal sequence occupies residues 1-21; that stretch reads MLPTYVRLFTAVCALATTASA. The cysteines at positions 69 and 98 are disulfide-linked. The (1,3-beta-D-glucosyl)n site is built by Tyr-87, Asn-159, Glu-160, and Asp-201. The active-site Proton donor is the Glu-160. 2 cysteine pairs are disulfide-bonded: Cys-215-Cys-350 and Cys-234-Cys-265. A glycan (N-linked (GlcNAc...) asparagine) is linked at Asn-236. Glu-262 acts as the Nucleophile in catalysis. Position 294 (Tyr-294) interacts with (1,3-beta-D-glucosyl)n. 3 N-linked (GlcNAc...) asparagine glycosylation sites follow: Asn-311, Asn-339, and Asn-357. The disordered stretch occupies residues 420 to 451; that stretch reads GESNTPGAHSSGSTSGSSSSGGSSSSSSDKES. The segment covering 429–446 has biased composition (low complexity); it reads SSGSTSGSSSSGGSSSSS. The GPI-like-anchor amidated serine moiety is linked to residue Ser-451. Positions 452 to 475 are cleaved as a propeptide — removed in mature form; the sequence is AAGTISVPFVGLLSAASFMAFFML.

Belongs to the glycosyl hydrolase 72 family. In terms of processing, the GPI-like anchor contains a phosphoceramide lipid group.

It is found in the cell membrane. Its function is as follows. Splits internally a 1,3-beta-glucan molecule and transfers the newly generated reducing end (the donor) to the non-reducing end of another 1,3-beta-glucan molecule (the acceptor) forming a 1,3-beta linkage, resulting in the elongation of 1,3-beta-glucan chains in the cell wall. Involved in cell wall morphogenesis. This chain is 1,3-beta-glucanosyltransferase gel2 (gel2), found in Aspergillus fumigatus (strain CBS 144.89 / FGSC A1163 / CEA10) (Neosartorya fumigata).